Consider the following 126-residue polypeptide: Holo-[acyl-carrier-protein] synthase (126 aa).

Positions 9 and 58 each coordinate Mg(2+).

The protein belongs to the P-Pant transferase superfamily. AcpS family. Requires Mg(2+) as cofactor.

It localises to the cytoplasm. It catalyses the reaction apo-[ACP] + CoA = holo-[ACP] + adenosine 3',5'-bisphosphate + H(+). Functionally, transfers the 4'-phosphopantetheine moiety from coenzyme A to a Ser of acyl-carrier-protein. The sequence is that of Holo-[acyl-carrier-protein] synthase from Yersinia pseudotuberculosis serotype I (strain IP32953).